Here is a 332-residue protein sequence, read N- to C-terminus: MASATAPAAAAPTLAPPLQQLRHLAEELRLLLPRVRVGEAQETTEEFNREMFWRRLNEAAVTVSREATTLTTVFSQLPLPSPQETQKFCEQVHAAIKAFIAVYYLLPKDQGITLRKLVRGATLDIVDGMAQLMEVLSITPTQSPENNDLISYNSVWVACQQMPQIPRDNKAAALLMLTKNVDFVKDAHEEMERAVEECDPYSGLLNDTDENNSDNHNDEDDVLGFPSNQDLYWSEDDQELIIPCLALVRASKACLKKIRILVAENGKKDQVAQLDDIVDISDEISPSVDDLALSIYPPMCHLTVRINSAKLVSVLKKALMSAFKMELECLLD.

Ala2 carries the N-acetylalanine modification. Interaction with TCF3 stretches follow at residues 2–184 (ASAT…VDFV) and 150–332 (ISYN…CLLD). Interaction with RPLP0 stretches follow at residues 2–190 (ASAT…AHEE) and 240–332 (LIIP…CLLD). The segment at 2-208 (ASATAPAAAA…DPYSGLLNDT (207 aa)) is required for interaction with CCND1.

This sequence belongs to the CCNDBP1 family. As to quaternary structure, interacts with CCND1 and GRAP2. May also interact with COPS5, RPLP0, SIRT6, SYF2 and TCF3. Post-translationally, phosphorylated.

Its subcellular location is the cytoplasm. It localises to the nucleus. Its function is as follows. May negatively regulate cell cycle progression. May act at least in part via inhibition of the cyclin-D1/CDK4 complex, thereby preventing phosphorylation of RB1 and blocking E2F-dependent transcription. The polypeptide is Cyclin-D1-binding protein 1 (CCNDBP1) (Macaca fascicularis (Crab-eating macaque)).